A 118-amino-acid polypeptide reads, in one-letter code: MHEYSIVSALIEQCEQHAKANRANKITRVDIKLGVMSGVEPALLETAFETFKLDGICRDAELRMTLQPLVIACLDCHQESELTERSIVCPACHSYHTRVLDGEDMLLMQLEMEQEDEH.

Histidine 2 contacts Ni(2+). Zn(2+) contacts are provided by cysteine 73, cysteine 76, cysteine 89, and cysteine 92.

This sequence belongs to the HypA/HybF family.

In terms of biological role, involved in the maturation of [NiFe] hydrogenases. Required for nickel insertion into the metal center of the hydrogenase. This is Hydrogenase maturation factor HypA from Shewanella sp. (strain MR-7).